The sequence spans 615 residues: 1-deoxy-D-xylulose-5-phosphate synthase (615 aa).

Residues His-77 and 118–120 (GHS) each bind thiamine diphosphate. Asp-149 contributes to the Mg(2+) binding site. Thiamine diphosphate is bound by residues 150–151 (GA), Asn-178, Tyr-286, and Glu-367. Position 178 (Asn-178) interacts with Mg(2+).

The protein belongs to the transketolase family. DXPS subfamily. In terms of assembly, homodimer. The cofactor is Mg(2+). Thiamine diphosphate serves as cofactor.

The catalysed reaction is D-glyceraldehyde 3-phosphate + pyruvate + H(+) = 1-deoxy-D-xylulose 5-phosphate + CO2. Its pathway is metabolic intermediate biosynthesis; 1-deoxy-D-xylulose 5-phosphate biosynthesis; 1-deoxy-D-xylulose 5-phosphate from D-glyceraldehyde 3-phosphate and pyruvate: step 1/1. In terms of biological role, catalyzes the acyloin condensation reaction between C atoms 2 and 3 of pyruvate and glyceraldehyde 3-phosphate to yield 1-deoxy-D-xylulose-5-phosphate (DXP). In Glaesserella parasuis serovar 5 (strain SH0165) (Haemophilus parasuis), this protein is 1-deoxy-D-xylulose-5-phosphate synthase.